Reading from the N-terminus, the 514-residue chain is Cobyric acid synthase (514 aa).

The GATase cobBQ-type domain occupies 258 to 458 (ALMVGVVRLP…IHGIFDNDGL (201 aa)). Cys339 (nucleophile) is an active-site residue. His450 is a catalytic residue.

Belongs to the CobB/CobQ family. CobQ subfamily.

It functions in the pathway cofactor biosynthesis; adenosylcobalamin biosynthesis. Its function is as follows. Catalyzes amidations at positions B, D, E, and G on adenosylcobyrinic A,C-diamide. NH(2) groups are provided by glutamine, and one molecule of ATP is hydrogenolyzed for each amidation. This Syntrophobacter fumaroxidans (strain DSM 10017 / MPOB) protein is Cobyric acid synthase.